The following is a 110-amino-acid chain: Chloride intracellular channel protein 1 (110 aa).

Alanine 2 is subject to N-acetylalanine. Positions 2 to 90 (AEEQPQVELF…EEFLEAVLCP (89 aa)) are required for insertion into the membrane. Residue lysine 13 is modified to N6-acetyllysine. A G-site motif is present at residues 24–27 (CPFS). A disulfide bridge connects residues cysteine 24 and cysteine 59. A helical transmembrane segment spans residues 26–46 (FSQRLFMVLWLKGVTFNVTTV).

Belongs to the chloride channel CLIC family. Monomer. Homodimer (in vitro). Interacts with TRAPPC2. Dimerization requires a conformation change that leads to the exposure of a large hydrophobic surface. In vivo, this may lead to membrane insertion.

The protein localises to the nucleus. The protein resides in the nucleus membrane. It localises to the cytoplasm. Its subcellular location is the cell membrane. It is found in the endoplasmic reticulum. It catalyses the reaction L-dehydroascorbate + 2 glutathione = glutathione disulfide + L-ascorbate. It carries out the reaction chloride(in) = chloride(out). The enzyme catalyses iodide(out) = iodide(in). The catalysed reaction is thiocyanate(in) = thiocyanate(out). It catalyses the reaction nitrate(in) = nitrate(out). It carries out the reaction bromide(in) = bromide(out). The enzyme catalyses fluoride(in) = fluoride(out). Functionally, in the soluble state, catalyzes glutaredoxin-like thiol disulfide exchange reactions with reduced glutathione as electron donor. Reduces selenite and dehydroascorbate and may act as an antioxidant during oxidative stress response. Can insert into membranes and form voltage-dependent multi-ion conductive channels. Membrane insertion seems to be redox-regulated and may occur only under oxidizing conditions. Involved in regulation of the cell cycle. This Sus scrofa (Pig) protein is Chloride intracellular channel protein 1 (CLIC1).